Reading from the N-terminus, the 242-residue chain is Putative prolyl 4-hydroxylase (242 aa).

The Fe2OG dioxygenase domain maps to N128–E238.

Belongs to the P4HA family. It depends on Fe cation as a cofactor. Requires L-ascorbate as cofactor.

It localises to the virion. The catalysed reaction is L-prolyl-[collagen] + 2-oxoglutarate + O2 = trans-4-hydroxy-L-prolyl-[collagen] + succinate + CO2. In terms of biological role, may catalyze the post-translational formation of 4-hydroxyproline in -Xaa-Pro-Gly- sequences in the 6 collagen-like proteins of Mimivirus. The chain is Putative prolyl 4-hydroxylase from Acanthamoeba polyphaga mimivirus (APMV).